Reading from the N-terminus, the 290-residue chain is 33 kDa chaperonin (290 aa).

2 disulfides stabilise this stretch: Cys235-Cys237 and Cys268-Cys271.

The protein belongs to the HSP33 family. Under oxidizing conditions two disulfide bonds are formed involving the reactive cysteines. Under reducing conditions zinc is bound to the reactive cysteines and the protein is inactive.

Its subcellular location is the cytoplasm. In terms of biological role, redox regulated molecular chaperone. Protects both thermally unfolding and oxidatively damaged proteins from irreversible aggregation. Plays an important role in the bacterial defense system toward oxidative stress. This is 33 kDa chaperonin from Streptococcus pneumoniae serotype 19F (strain G54).